The primary structure comprises 117 residues: Putative membrane protein insertion efficiency factor (117 aa).

It belongs to the UPF0161 family.

Its subcellular location is the cell inner membrane. In terms of biological role, could be involved in insertion of integral membrane proteins into the membrane. The protein is Putative membrane protein insertion efficiency factor of Bartonella quintana (strain Toulouse) (Rochalimaea quintana).